Here is a 463-residue protein sequence, read N- to C-terminus: MAHSRARRRKRASATQLYQTCKASGTCPPDVIPKVEQNTLADKILKWGSLGVFFGGLGIGTGSGTGGRTGYVPVGSTPRPAISTGPTARPPIVVDTVGPTDPSIVSLVEESAIINSGVPDPLPPVHGGFEITTSQSATPAILDVSVTTQNTTSTSIFRNPVFSEPSITQSQPSIESGAHVFISPSTISPHSTEDIPLDTFIVSSSDSNPASSTPVPATVARPRLGLYSRALHQVQVTDPAFLSSPQRLITFDNPTYEGEDISLQFAHNTIHEPPDEAFMDIIRLHRPAITSRRGLVRFSRIGQRGSMYTRSGKHIGGRVHFFKDISPISAAAEEIELHPLVAAAQDHSGLFDIYAEPDPDPVAVNTSGSLSSASTPFAQSSLSSAPWGNTTVPLSLPGDIFIQPGPDITFPTAPTVTPYNPVTPALPTGPVFITASGFYLYPTWYFTRKRRKRVSLFFTDVAA.

Positions 1–12 match the Nuclear localization signal motif; the sequence is MAHSRARRRKRA. Cysteines 21 and 27 form a disulfide. Positions 446 to 454 match the Nuclear localization signal motif; it reads FTRKRRKRV.

Belongs to the papillomaviridae L2 protein family. As to quaternary structure, interacts with major capsid protein L1. Interacts with E2; this interaction inhibits E2 transcriptional activity but not the DNA replication function E2. Interacts with host GADD45GIP1. Interacts with host HSPA8; this interaction is required for L2 nuclear translocation. Interacts with host importins KPNB2 and KPNB3. Forms a complex with importin alpha2-beta1 heterodimers via interaction with the importin alpha2 adapter. Interacts with host DYNLT1; this interaction is essential for virus intracellular transport during entry. Interacts (via C-terminus) with host retromer subunits VPS35 and VPS29. Highly phosphorylated.

It localises to the virion. Its subcellular location is the host nucleus. The protein localises to the host early endosome. It is found in the host Golgi apparatus. Its function is as follows. Minor protein of the capsid that localizes along the inner surface of the virion, within the central cavities beneath the L1 pentamers. Plays a role in capsid stabilization through interaction with the major capsid protein L1. Once the virion enters the host cell, L2 escorts the genomic DNA into the nucleus by promoting escape from the endosomal compartments and traffic through the host Golgi network. Mechanistically, the C-terminus of L2 possesses a cell-penetrating peptide that protudes from the host endosome, interacts with host cytoplasmic retromer cargo and thereby mediates the capsid delivery to the host trans-Golgi network. Plays a role through its interaction with host dynein in the intracellular microtubule-dependent transport of viral capsid toward the nucleus. Mediates the viral genome import into the nucleus through binding to host importins. Once within the nucleus, L2 localizes viral genomes to host PML bodies in order to activate early gene expression for establishment of infection. Later on, promotes late gene expression by interacting with the viral E2 protein and by inhibiting its transcriptional activation functions. During virion assembly, encapsidates the genome by direct interaction with the viral DNA. The polypeptide is Minor capsid protein L2 (Homo sapiens (Human)).